A 132-amino-acid chain; its full sequence is Large ribosomal subunit protein bL17 (132 aa).

Belongs to the bacterial ribosomal protein bL17 family. As to quaternary structure, part of the 50S ribosomal subunit. Contacts protein L32.

This Ralstonia pickettii (strain 12J) protein is Large ribosomal subunit protein bL17.